A 178-amino-acid chain; its full sequence is RNA-binding protein (178 aa).

The interval 108 to 178 (SGFQKPKIGS…KGKGRRGGKR (71 aa)) is disordered. Residues 168–178 (SKGKGRRGGKR) are compositionally biased toward basic residues.

Belongs to the phytoreovirus RNA-binding protein family.

The protein resides in the host cytoplasm. In terms of biological role, constituent of viral factories. Binds to ssRNA and dsRNA. This is RNA-binding protein from Wound tumor virus (strain NJ) (WTV).